The sequence spans 244 residues: Phosphoadenosine 5'-phosphosulfate reductase (244 aa).

The active-site Nucleophile; cysteine thiosulfonate intermediate is cysteine 239.

This sequence belongs to the PAPS reductase family. CysH subfamily.

The protein resides in the cytoplasm. It carries out the reaction [thioredoxin]-disulfide + sulfite + adenosine 3',5'-bisphosphate + 2 H(+) = [thioredoxin]-dithiol + 3'-phosphoadenylyl sulfate. It participates in sulfur metabolism; hydrogen sulfide biosynthesis; sulfite from sulfate: step 3/3. Catalyzes the formation of sulfite from phosphoadenosine 5'-phosphosulfate (PAPS) using thioredoxin as an electron donor. In Enterobacter sp. (strain 638), this protein is Phosphoadenosine 5'-phosphosulfate reductase.